A 517-amino-acid polypeptide reads, in one-letter code: Bifunctional purine biosynthesis protein PurH (517 aa).

In terms of domain architecture, MGS-like spans 1 to 145 (MSPLALVSVS…KNHKDVSVLV (145 aa)).

Belongs to the PurH family.

The catalysed reaction is (6R)-10-formyltetrahydrofolate + 5-amino-1-(5-phospho-beta-D-ribosyl)imidazole-4-carboxamide = 5-formamido-1-(5-phospho-D-ribosyl)imidazole-4-carboxamide + (6S)-5,6,7,8-tetrahydrofolate. The enzyme catalyses IMP + H2O = 5-formamido-1-(5-phospho-D-ribosyl)imidazole-4-carboxamide. It participates in purine metabolism; IMP biosynthesis via de novo pathway; 5-formamido-1-(5-phospho-D-ribosyl)imidazole-4-carboxamide from 5-amino-1-(5-phospho-D-ribosyl)imidazole-4-carboxamide (10-formyl THF route): step 1/1. Its pathway is purine metabolism; IMP biosynthesis via de novo pathway; IMP from 5-formamido-1-(5-phospho-D-ribosyl)imidazole-4-carboxamide: step 1/1. The sequence is that of Bifunctional purine biosynthesis protein PurH from Prochlorococcus marinus subsp. pastoris (strain CCMP1986 / NIES-2087 / MED4).